The primary structure comprises 194 residues: Peptidyl-tRNA hydrolase (194 aa).

Position 17 (Tyr17) interacts with tRNA. The active-site Proton acceptor is His22. TRNA-binding residues include Tyr68, Asn70, and Asn116.

It belongs to the PTH family. In terms of assembly, monomer.

It localises to the cytoplasm. It carries out the reaction an N-acyl-L-alpha-aminoacyl-tRNA + H2O = an N-acyl-L-amino acid + a tRNA + H(+). Functionally, hydrolyzes ribosome-free peptidyl-tRNAs (with 1 or more amino acids incorporated), which drop off the ribosome during protein synthesis, or as a result of ribosome stalling. Its function is as follows. Catalyzes the release of premature peptidyl moieties from peptidyl-tRNA molecules trapped in stalled 50S ribosomal subunits, and thus maintains levels of free tRNAs and 50S ribosomes. This Pseudomonas putida (strain ATCC 700007 / DSM 6899 / JCM 31910 / BCRC 17059 / LMG 24140 / F1) protein is Peptidyl-tRNA hydrolase.